Reading from the N-terminus, the 329-residue chain is Malate dehydrogenase (329 aa).

12–18 (GAAGQIG) contacts NAD(+). Substrate-binding residues include R95 and R101. NAD(+)-binding positions include N108, Q115, and 132–134 (VGN). N134 and R165 together coordinate substrate. Catalysis depends on H190, which acts as the Proton acceptor.

The protein belongs to the LDH/MDH superfamily. MDH type 2 family.

The catalysed reaction is (S)-malate + NAD(+) = oxaloacetate + NADH + H(+). Catalyzes the reversible oxidation of malate to oxaloacetate. This Bordetella bronchiseptica (strain ATCC BAA-588 / NCTC 13252 / RB50) (Alcaligenes bronchisepticus) protein is Malate dehydrogenase.